A 135-amino-acid polypeptide reads, in one-letter code: Prostate and breast cancer overexpressed gene 1 protein (135 aa).

In terms of tissue distribution, expressed in colon, prostate, small intestine, testis and spleen, with lower expression in thymus, ovary, and peripheral blood leukocytes. Up-regulated expression in prostate, breast, and bladder cancer, but not in lung and colon cancer.

Its subcellular location is the cytoplasm. It localises to the nucleus. The polypeptide is Prostate and breast cancer overexpressed gene 1 protein (PBOV1) (Homo sapiens (Human)).